Consider the following 902-residue polypeptide: Respiratory nitrate reductase alpha chain (902 aa).

His29, Cys33, and Cys37 together coordinate [4Fe-4S] cluster.

It belongs to the prokaryotic molybdopterin-containing oxidoreductase family. Heterotrimer composed of an alpha, a beta and a gamma chain. Alpha and beta are catalytic chains; gamma chains are involved in binding the enzyme complex to the cytoplasmic membrane. The cofactor is [4Fe-4S] cluster. Mo-bis(molybdopterin guanine dinucleotide) serves as cofactor.

The protein localises to the cell membrane. It localises to the cytoplasm. It catalyses the reaction nitrate + a quinol = a quinone + nitrite + H2O. With respect to regulation, inhibited by micromolar concentrations of azide. Its function is as follows. The nitrate reductase enzyme complex allows Bradyrhizobium sp. USDA 3045 to use nitrate as an electron acceptor during anaerobic growth. The alpha chain is the actual site of nitrate reduction. In Bradyrhizobium sp, this protein is Respiratory nitrate reductase alpha chain (narG).